A 181-amino-acid polypeptide reads, in one-letter code: Oligoribonuclease (181 aa).

The region spanning 8–171 is the Exonuclease domain; it reads LIWIDLEMTG…QDIQESIAEL (164 aa). The active site involves Tyr-129.

Belongs to the oligoribonuclease family.

Its subcellular location is the cytoplasm. In terms of biological role, 3'-to-5' exoribonuclease specific for small oligoribonucleotides. This Shewanella oneidensis (strain ATCC 700550 / JCM 31522 / CIP 106686 / LMG 19005 / NCIMB 14063 / MR-1) protein is Oligoribonuclease.